Reading from the N-terminus, the 307-residue chain is Olfactory receptor 12D2 (307 aa).

Topologically, residues 1 to 23 are extracellular; the sequence is MLNTTSVTEFLLLGVTDIQELQP. Asn3 carries an N-linked (GlcNAc...) asparagine glycan. The chain crosses the membrane as a helical span at residues 24 to 44; sequence FLFVVFLTIYFISVTGNGAVL. Topologically, residues 45–52 are cytoplasmic; it reads MIVISDPR. A helical transmembrane segment spans residues 53-73; it reads LHSLMYFFLGNLSYLDICYST. Residues 74-97 lie on the Extracellular side of the membrane; the sequence is VTLPKMLQNFLSTHKAISFLGCIS. A disulfide bond links Cys95 and Cys187. Residues 98 to 118 form a helical membrane-spanning segment; sequence QLHFFHSLGSTESMLFAVMAF. Residues 119–137 lie on the Cytoplasmic side of the membrane; sequence DLSVAICKPLRYTVIMNPQ. A helical transmembrane segment spans residues 138–158; sequence LCTQMAITIWVIGFFHALLHS. At 159 to 195 the chain is on the extracellular side; it reads VMTSRLNFCGSNRIHHFLCDIKPLLKLACGNTELNQW. Residues 196–215 form a helical membrane-spanning segment; it reads LLSTVTGTIAMGPFFLTLLS. Over 216-236 the chain is Cytoplasmic; the sequence is YFYIITYLFFKTRSCSMLCKA. Residues 237 to 257 form a helical membrane-spanning segment; that stretch reads LSTCASHFMVVILFYAPVLFT. Residues 258–270 are Extracellular-facing; that stretch reads YIHPALESFMDQD. The helical transmembrane segment at 271–291 threads the bilayer; sequence RIVAIMYTVVTPVLNPLIYTL. Topologically, residues 292–307 are cytoplasmic; sequence RNKEVKGALGRVIRRL.

The protein belongs to the G-protein coupled receptor 1 family.

It localises to the cell membrane. Odorant receptor. The sequence is that of Olfactory receptor 12D2 (OR12D2) from Homo sapiens (Human).